Consider the following 396-residue polypeptide: Tryptophan synthase beta chain (396 aa).

Lys-86 bears the N6-(pyridoxal phosphate)lysine mark.

This sequence belongs to the TrpB family. In terms of assembly, tetramer of two alpha and two beta chains. The cofactor is pyridoxal 5'-phosphate.

The enzyme catalyses (1S,2R)-1-C-(indol-3-yl)glycerol 3-phosphate + L-serine = D-glyceraldehyde 3-phosphate + L-tryptophan + H2O. The protein operates within amino-acid biosynthesis; L-tryptophan biosynthesis; L-tryptophan from chorismate: step 5/5. Its function is as follows. The beta subunit is responsible for the synthesis of L-tryptophan from indole and L-serine. The polypeptide is Tryptophan synthase beta chain (Pectobacterium carotovorum subsp. carotovorum (strain PC1)).